A 361-amino-acid polypeptide reads, in one-letter code: Cytochrome P450 family protein EryCII (361 aa).

It belongs to the cytochrome P450 family. Heterotetramer composed of EryCII and EryCIII.

The protein operates within antibiotic biosynthesis; erythromycin biosynthesis. Functionally, involved in the erythromycin biosynthesis pathway. Acts by forming a complex and stabilizing the desosaminyl transferase EryCIII. This Saccharopolyspora erythraea (strain ATCC 11635 / DSM 40517 / JCM 4748 / NBRC 13426 / NCIMB 8594 / NRRL 2338) protein is Cytochrome P450 family protein EryCII (eryCII).